The chain runs to 424 residues: Glutamyl-tRNA(Gln) amidotransferase subunit D (424 aa).

Residues 58 to 79 are disordered; the sequence is NTNGGLNGGKEHKTAGEEVQKS. The span at 66-78 shows a compositional bias: basic and acidic residues; it reads GKEHKTAGEEVQK. The Asparaginase/glutaminase domain occupies 84 to 406; the sequence is PKVAILSTGG…LGQTDEFNEA (323 aa). Catalysis depends on residues T94, T170, D171, and K247.

This sequence belongs to the asparaginase 1 family. GatD subfamily. Heterodimer of GatD and GatE.

It carries out the reaction L-glutamyl-tRNA(Gln) + L-glutamine + ATP + H2O = L-glutaminyl-tRNA(Gln) + L-glutamate + ADP + phosphate + H(+). In terms of biological role, allows the formation of correctly charged Gln-tRNA(Gln) through the transamidation of misacylated Glu-tRNA(Gln) in organisms which lack glutaminyl-tRNA synthetase. The reaction takes place in the presence of glutamine and ATP through an activated gamma-phospho-Glu-tRNA(Gln). The GatDE system is specific for glutamate and does not act on aspartate. This Methanosarcina barkeri (strain Fusaro / DSM 804) protein is Glutamyl-tRNA(Gln) amidotransferase subunit D.